The sequence spans 532 residues: Cytochrome P450 monooxygenase criE (532 aa).

Residues 18–38 (VSPAALSWAVVAVYIGTFFWL) traverse the membrane as a helical segment. Position 441 (cysteine 441) interacts with heme.

This sequence belongs to the cytochrome P450 family. It depends on heme as a cofactor.

It is found in the membrane. The enzyme catalyses preechinulin + reduced [NADPH--hemoprotein reductase] + O2 = neoechinulin A + oxidized [NADPH--hemoprotein reductase] + 2 H2O + H(+). It participates in secondary metabolite biosynthesis. Its pathway is alkaloid biosynthesis. Cytochrome P450 monooxygenase; part of the gene cluster that mediates the biosynthesis of echinulin family alkaloid. The pathway begins with the biosynthesis of the cyclic dipeptide cyclo-L-Trp-L-Ala (cyclo-TA) by the NRPS criC via condensation of L-alanine and L-tryptophan. The prenyltransferase criA then catalyzes the first prenylation step, a reverse prenylation reaction at C2, to yield preechinulin. Preechinulin is the substrate of the cytochrome P450 monooxygenase criE that catalyzes the formation of the double bond between C10 and C11 to produce neoechulin A. The unique prenyltransferase criF functions as a competitive enzyme with criE for preechinulin metabolization and uses preechinulin for effective regiospecific prenylations. Preechinulin is prenylated by criF at C5 or C7. C7-prenylation leads to accumulation of tardioxopiperazine B without further modification by criF. In contrast, the C5-prenylated tardioxopiperazine A can be prenylated again by criF, predominantly at C7 to form echinulin or less frequently at C4 to give variecolorin L. CriF also accepts neoechilunin A to produce varlecolorin G (prenylation at C5) or isoechinulin A (prenylation at C7). CriF further converts isoechinulin A into dehydroechinulin. Moreover, a yet unidentified enzyme can also convert neoechilunin A into neoechilunin B by introducing a double bond between positions C14 and C17 and thus provides a further substrate to criF for C5 and C7 prenylation. In Aspergillus cristatus (Chinese Fuzhuan brick tea-fermentation fungus), this protein is Cytochrome P450 monooxygenase criE.